Reading from the N-terminus, the 396-residue chain is Chalcone synthase (396 aa).

The active site involves C167.

This sequence belongs to the thiolase-like superfamily. Chalcone/stilbene synthases family.

It catalyses the reaction (E)-4-coumaroyl-CoA + 3 malonyl-CoA + 3 H(+) = 2',4,4',6'-tetrahydroxychalcone + 3 CO2 + 4 CoA. Its pathway is secondary metabolite biosynthesis; flavonoid biosynthesis. In terms of biological role, the primary product of this enzyme is 4,2',4',6'-tetrahydroxychalcone (also termed naringenin-chalcone or chalcone) which can under specific conditions spontaneously isomerize into naringenin. The protein is Chalcone synthase (CHS) of Chrysosplenium americanum (American golden saxifrage).